Consider the following 753-residue polypeptide: Pesticidal crystal protein Cry20Aa (753 aa).

A compositionally biased stretch (polar residues) spans 680–696 (DTTYQPSYDNYNQNASG). The interval 680–721 (DTTYQPSYDNYNQNASGTYDDGYNPNASDSYDQSYTNNYSQN) is disordered. Residues 712–721 (QSYTNNYSQN) are compositionally biased toward low complexity.

Belongs to the delta endotoxin family. Has low mosquitocidal activity probably due to rapid proteolysis to inactive 56 kDa and 43 kDa proteins.

In terms of biological role, promotes colloidosmotic lysis by binding to the midgut epithelial cells of mosquitos. Active against Aedes aegypti and Culex quinquefasciatus larvae. This is Pesticidal crystal protein Cry20Aa (cry20Aa) from Bacillus thuringiensis subsp. fukuokaensis.